The chain runs to 155 residues: SsrA-binding protein (155 aa).

Belongs to the SmpB family.

It is found in the cytoplasm. Required for rescue of stalled ribosomes mediated by trans-translation. Binds to transfer-messenger RNA (tmRNA), required for stable association of tmRNA with ribosomes. tmRNA and SmpB together mimic tRNA shape, replacing the anticodon stem-loop with SmpB. tmRNA is encoded by the ssrA gene; the 2 termini fold to resemble tRNA(Ala) and it encodes a 'tag peptide', a short internal open reading frame. During trans-translation Ala-aminoacylated tmRNA acts like a tRNA, entering the A-site of stalled ribosomes, displacing the stalled mRNA. The ribosome then switches to translate the ORF on the tmRNA; the nascent peptide is terminated with the 'tag peptide' encoded by the tmRNA and targeted for degradation. The ribosome is freed to recommence translation, which seems to be the essential function of trans-translation. The protein is SsrA-binding protein of Lactococcus lactis subsp. cremoris (strain MG1363).